The following is a 561-amino-acid chain: Microtubule-associated protein VP6 (561 aa).

Interacts with VP2.

It localises to the virion. The protein resides in the host cytoplasm. Its subcellular location is the host cytoskeleton. In terms of biological role, minor inner capsid component. Displays NTPase and RNA 5'-triphosphatase (RTPase) activities. May function as a cofactor of polymerase VP2. Associates with microtubules and plays a role in the formation, structural organization and morphology of viral inclusions, where the assembly of cores and the replication of viral RNA occur. The polypeptide is Microtubule-associated protein VP6 (S6) (Lymantria dispar cypovirus 1 (isolate Rao) (LdCPV-1)).